The primary structure comprises 173 residues: Co-chaperone protein HscB homolog (173 aa).

Positions 5-77 (CHFALFELQP…AQRARYLLTI (73 aa)) constitute a J domain.

It belongs to the HscB family. In terms of assembly, interacts with HscA and stimulates its ATPase activity.

Co-chaperone involved in the maturation of iron-sulfur cluster-containing proteins. Seems to help targeting proteins to be folded toward HscA. The protein is Co-chaperone protein HscB homolog of Pseudomonas fluorescens (strain Pf0-1).